A 289-amino-acid chain; its full sequence is Eukaryotic translation initiation factor 3 subunit F (289 aa).

Residues 7-137 enclose the MPN domain; sequence VKVHPVVLFQ…LRAYVCVPLG (131 aa).

This sequence belongs to the eIF-3 subunit F family. As to quaternary structure, component of the eukaryotic translation initiation factor 3 (eIF-3) complex.

The protein localises to the cytoplasm. Component of the eukaryotic translation initiation factor 3 (eIF-3) complex, which is involved in protein synthesis of a specialized repertoire of mRNAs and, together with other initiation factors, stimulates binding of mRNA and methionyl-tRNAi to the 40S ribosome. The eIF-3 complex specifically targets and initiates translation of a subset of mRNAs involved in cell proliferation. The sequence is that of Eukaryotic translation initiation factor 3 subunit F from Bombyx mori (Silk moth).